The chain runs to 289 residues: Protease HtpX (289 aa).

The next 2 helical transmembrane spans lie at 6–26 (ILFLLTNLAITFVLGIVLNII) and 38–58 (TGILMMSLLFGFTGSLISLFM). Residue His144 participates in Zn(2+) binding. Glu145 is an active-site residue. His148 is a Zn(2+) binding site. The next 2 helical transmembrane spans lie at 152–172 (GDMVTMTLLQGVLNTFVIFLS) and 194–214 (LVFWVVDIALQMIFGILATMI). Glu223 lines the Zn(2+) pocket.

This sequence belongs to the peptidase M48B family. The cofactor is Zn(2+).

Its subcellular location is the cell inner membrane. The polypeptide is Protease HtpX (Haemophilus ducreyi (strain 35000HP / ATCC 700724)).